We begin with the raw amino-acid sequence, 116 residues long: Large ribosomal subunit protein uL24 (116 aa).

Residues 1–21 (MATNNGAGKARHKFHVKKGDT) form a disordered region.

The protein belongs to the universal ribosomal protein uL24 family. In terms of assembly, part of the 50S ribosomal subunit.

Functionally, one of two assembly initiator proteins, it binds directly to the 5'-end of the 23S rRNA, where it nucleates assembly of the 50S subunit. One of the proteins that surrounds the polypeptide exit tunnel on the outside of the subunit. The sequence is that of Large ribosomal subunit protein uL24 from Gloeobacter violaceus (strain ATCC 29082 / PCC 7421).